Consider the following 438-residue polypeptide: Ribosomal protein uS12 methylthiotransferase RimO (438 aa).

The 111-residue stretch at 4 to 114 (PRVSFVSLGC…VMNAVHEVAP (111 aa)) folds into the MTTase N-terminal domain. Residues Cys13, Cys49, Cys78, Cys146, Cys150, and Cys153 each coordinate [4Fe-4S] cluster. Positions 132-370 (LTPRHYAYLK…MAKQQQISTN (239 aa)) constitute a Radical SAM core domain. The 66-residue stretch at 373–438 (KKKVGKRLPV…DAYDLHGTAV (66 aa)) folds into the TRAM domain.

This sequence belongs to the methylthiotransferase family. RimO subfamily. It depends on [4Fe-4S] cluster as a cofactor.

Its subcellular location is the cytoplasm. The catalysed reaction is L-aspartate(89)-[ribosomal protein uS12]-hydrogen + (sulfur carrier)-SH + AH2 + 2 S-adenosyl-L-methionine = 3-methylsulfanyl-L-aspartate(89)-[ribosomal protein uS12]-hydrogen + (sulfur carrier)-H + 5'-deoxyadenosine + L-methionine + A + S-adenosyl-L-homocysteine + 2 H(+). Its function is as follows. Catalyzes the methylthiolation of an aspartic acid residue of ribosomal protein uS12. This is Ribosomal protein uS12 methylthiotransferase RimO from Brucella ovis (strain ATCC 25840 / 63/290 / NCTC 10512).